We begin with the raw amino-acid sequence, 308 residues long: Taste receptor type 2 member 107 (308 aa).

The Extracellular segment spans residues 1–7 (MLSAAEG). Residues 8-28 (ILLCVVTSEAVLGVLGDTFIA) form a helical membrane-spanning segment. At 29-43 (LANCMEYAKNKKLSK) the chain is on the cytoplasmic side. The helical transmembrane segment at 44-64 (IGFILIGLAISRIGVVWIIIL) threads the bilayer. Topologically, residues 65-94 (QGYMQVFFPHILTFGNITEYITYIWVFLNH) are extracellular. A glycan (N-linked (GlcNAc...) asparagine) is linked at Asn80. The chain crosses the membrane as a helical span at residues 95–115 (LSVWFATNLNILYFLKIANFS). Topologically, residues 116–127 (NSVFLWLKSRVR) are cytoplasmic. A helical membrane pass occupies residues 128–148 (VVFIFLSGCLLTSWLLCFPQF). At 149 to 180 (SKMLNNSKMYWGNTSWLQQQKNVFLINQSLTN) the chain is on the extracellular side. N-linked (GlcNAc...) asparagine glycosylation is found at Asn153, Asn161, and Asn175. A helical transmembrane segment spans residues 181–201 (LGIFFFIIVSLITCFLLIVFL). Residues 202-232 (WRHIRQMHSDGSGLRDLNTEAHVKAMRVLIS) lie on the Cytoplasmic side of the membrane. A helical transmembrane segment spans residues 233 to 253 (FAVLFILHFVGLSIQVLCFFL). Residues 254 to 258 (PQNNL) lie on the Extracellular side of the membrane. A helical transmembrane segment spans residues 259–279 (LFITGLIATCLYPCGHSIILI). Topologically, residues 280–308 (LGNKQLKQASLKALQHLTCCETKRNLSVT) are cytoplasmic.

The protein belongs to the G-protein coupled receptor T2R family.

It is found in the membrane. In terms of biological role, putative taste receptor which may play a role in the perception of bitterness. The protein is Taste receptor type 2 member 107 of Rattus norvegicus (Rat).